Reading from the N-terminus, the 71-residue chain is Large ribosomal subunit protein bL31 (71 aa).

Zn(2+) contacts are provided by cysteine 16, cysteine 18, cysteine 37, and cysteine 40.

The protein belongs to the bacterial ribosomal protein bL31 family. Type A subfamily. Part of the 50S ribosomal subunit. The cofactor is Zn(2+).

Its function is as follows. Binds the 23S rRNA. The chain is Large ribosomal subunit protein bL31 from Pseudomonas aeruginosa (strain LESB58).